The chain runs to 1110 residues: Brother of CDO (1110 aa).

Residues Met-1 to Ala-25 form the signal peptide. At Asp-26–Tyr-850 the chain is on the extracellular side. Ig-like C2-type domains lie at Pro-31–Thr-118, Asp-124–Ser-208, Pro-229–Tyr-310, and Pro-318–Arg-402. Cystine bridges form between Cys-52–Cys-101, Cys-145–Cys-195, Cys-247–Cys-294, and Cys-339–Cys-386. 5 N-linked (GlcNAc...) asparagine glycosylation sites follow: Asn-60, Asn-71, Asn-93, Asn-184, and Asn-270. Residues Asp-407 to Cys-458 are disordered. Over residues Ala-421 to Pro-430 the composition is skewed to pro residues. 3 consecutive Fibronectin type-III domains span residues Ala-469 to Pro-566, Ala-603 to Gly-698, and Pro-707 to Arg-807. The N-linked (GlcNAc...) asparagine glycan is linked to Asn-512. A disordered region spans residues Arg-561–Ser-610. 2 N-linked (GlcNAc...) asparagine glycosylation sites follow: Asn-720 and Asn-754. The tract at residues Phe-809–Pro-828 is disordered. The segment covering Gly-814–Pro-828 has biased composition (pro residues). A helical membrane pass occupies residues Leu-851–Cys-871. Residues Leu-872 to Ile-1110 are Cytoplasmic-facing. The disordered stretch occupies residues Ser-1065–Ile-1110. Residues Trp-1075–Gly-1086 are compositionally biased toward polar residues.

Part of a complex that contains BOC, CDON, NEO1, cadherins and CTNNB1. Interacts with SHH, DHH and IHH. Interacts with NTN3. Interacts with CDH2 and CTNNB1. Interacts with CDH15 only during the early stages of myoblast differentiation. In terms of tissue distribution, highly expressed in embryonic somites, limb buds, dermomyotomes and in the neural tube.

Its subcellular location is the membrane. In terms of biological role, component of a cell-surface receptor complex that mediates cell-cell interactions between muscle precursor cells. Promotes differentiation of myogenic cells. The protein is Brother of CDO (Boc) of Mus musculus (Mouse).